The following is a 158-amino-acid chain: Cystin-1 (158 aa).

A disordered region spans residues 1 to 146; that stretch reads MGSGSSRSSR…AAISYDHSEE (146 aa). Glycine 2 carries N-myristoyl glycine lipidation. Low complexity-rich tracts occupy residues 19-32 and 39-52; these read ESLP…ALEG and PVAA…AAEE. A Ciliary targeting motif motif is present at residues 29-33; the sequence is ALEGG. Residues 65-75 are compositionally biased toward basic and acidic residues; the sequence is DGRDETLRLLD.

Interacts (when myristoylated) with UNC119 and UNC119B; interaction is required for localization to cilium. Expressed at high levels in the kidney and pancreas. Moderate expression seen in the skeletal muscle, liver and heart. A weak expression seen in the brain, lung, uterus, prostate, testis, small intestine and colon.

It localises to the cell projection. It is found in the cilium membrane. The protein resides in the cytoplasm. The protein localises to the cytoskeleton. Its subcellular location is the cilium axoneme. The chain is Cystin-1 (CYS1) from Homo sapiens (Human).